The primary structure comprises 325 residues: Dehydrogenase/reductase SDR family member 7B (325 aa).

Residues 1 to 17 are Cytoplasmic-facing; it reads MISPSSRKGMLKERAMD. The chain crosses the membrane as a helical; Signal-anchor for type II membrane protein span at residues 18–38; it reads LVTQTTILPLLFGCLGIFSLF. The Lumenal portion of the chain corresponds to 39–325; the sequence is RLLQRTRSKA…ARKERKSKNS (287 aa). The NAD(+) site is built by Ser-62 and Leu-64. Ser-194 lines the substrate pocket. Positions 207, 211, and 242 each coordinate NAD(+). Residue Tyr-207 is the Proton acceptor of the active site.

Belongs to the short-chain dehydrogenases/reductases (SDR) family.

The protein resides in the endoplasmic reticulum membrane. In terms of biological role, putative oxidoreductase. The sequence is that of Dehydrogenase/reductase SDR family member 7B (Dhrs7b) from Rattus norvegicus (Rat).